Here is a 343-residue protein sequence, read N- to C-terminus: MFSLPSLPSWLPGLPSLEWGSSLLDSLLQGLIGALGVLVLNSLLKVYFFVGCANDPQRRPEKERLRAQWASLETVHLAGLALFLTVVGSRVAALVVLEFSLRAVSTLLSLGKGSQGAAERLQLYLLCQYSLGCGLTCGLSFLQEGAPHRTLNLLLSLGLATLLGLGARRLHRHVCRLYELHSSQRYCGVCLGLLAHAHGLPQLLGRALAIAFAVGDLAAVALINQDFLTTSEAMRFWTPLTICYTLLVIYMQEEQRQHPGLQSQVQTVLVRMGGLFVLLLTVGRWLDLLGILVSLLGELWCLVGVRTLLDLCQIQDFPSQRPPVSTPSQPLPSAPQSQSSAPS.

Transmembrane regions (helical) follow at residues 30 to 50 (GLIGALGVLVLNSLLKVYFFV), 77 to 97 (LAGLALFLTVVGSRVAALVVL), 121 to 141 (LQLYLLCQYSLGCGLTCGLSF), 145 to 167 (GAPHRTLNLLLSLGLATLLGLGA), 203 to 223 (LLGRALAIAFAVGDLAAVALI), 233 to 252 (AMRFWTPLTICYTLLVIYMQ), 263 to 283 (SQVQTVLVRMGGLFVLLLTVG), and 285 to 305 (WLDLLGILVSLLGELWCLVGV). The span at 320-333 (QRPPVSTPSQPLPS) shows a compositional bias: pro residues. Residues 320 to 343 (QRPPVSTPSQPLPSAPQSQSSAPS) form a disordered region. The span at 334 to 343 (APQSQSSAPS) shows a compositional bias: low complexity.

The protein belongs to the TMEM82 family.

The protein localises to the membrane. This is Transmembrane protein 82 (TMEM82) from Homo sapiens (Human).